The chain runs to 582 residues: Membrane protein insertase YidC (582 aa).

4 consecutive transmembrane segments (helical) span residues 4 to 24 (NTVL…YIQQ), 376 to 396 (IIPN…IIFF), 446 to 466 (ASGC…FGLF), and 542 to 562 (FMPL…LLFW).

It belongs to the OXA1/ALB3/YidC family. Type 1 subfamily. In terms of assembly, interacts with the Sec translocase complex via SecD. Specifically interacts with transmembrane segments of nascent integral membrane proteins during membrane integration.

The protein localises to the cell inner membrane. Functionally, required for the insertion and/or proper folding and/or complex formation of integral membrane proteins into the membrane. Involved in integration of membrane proteins that insert both dependently and independently of the Sec translocase complex, as well as at least some lipoproteins. Aids folding of multispanning membrane proteins. The chain is Membrane protein insertase YidC from Treponema denticola (strain ATCC 35405 / DSM 14222 / CIP 103919 / JCM 8153 / KCTC 15104).